A 272-amino-acid chain; its full sequence is Glutamate racemase (272 aa).

Residues 16-17 and 48-49 each bind substrate; these read DS and YG. Cysteine 79 serves as the catalytic Proton donor/acceptor. Residue 80-81 coordinates substrate; sequence NT. Residue cysteine 191 is the Proton donor/acceptor of the active site. 192 to 193 contributes to the substrate binding site; that stretch reads TH.

The protein belongs to the aspartate/glutamate racemases family.

The enzyme catalyses L-glutamate = D-glutamate. It functions in the pathway cell wall biogenesis; peptidoglycan biosynthesis. Functionally, provides the (R)-glutamate required for cell wall biosynthesis. This Chlorobaculum tepidum (strain ATCC 49652 / DSM 12025 / NBRC 103806 / TLS) (Chlorobium tepidum) protein is Glutamate racemase.